A 588-amino-acid chain; its full sequence is Aspartate--tRNA ligase (588 aa).

Glutamate 174 provides a ligand contact to L-aspartate. The tract at residues 198 to 201 (QLFK) is aspartate. Residue arginine 220 coordinates L-aspartate. ATP-binding positions include 220-222 (RDE) and glutamine 229. Histidine 448 is an L-aspartate binding site. Glutamate 482 contributes to the ATP binding site. Arginine 489 is a binding site for L-aspartate. Position 534–537 (534–537 (GIDR)) interacts with ATP.

Belongs to the class-II aminoacyl-tRNA synthetase family. Type 1 subfamily. Homodimer.

The protein resides in the cytoplasm. The enzyme catalyses tRNA(Asp) + L-aspartate + ATP = L-aspartyl-tRNA(Asp) + AMP + diphosphate. Catalyzes the attachment of L-aspartate to tRNA(Asp) in a two-step reaction: L-aspartate is first activated by ATP to form Asp-AMP and then transferred to the acceptor end of tRNA(Asp). In Xanthomonas campestris pv. campestris (strain 8004), this protein is Aspartate--tRNA ligase.